Reading from the N-terminus, the 172-residue chain is Protein-export protein SecB (172 aa).

It belongs to the SecB family. As to quaternary structure, homotetramer, a dimer of dimers. One homotetramer interacts with 1 SecA dimer.

Its subcellular location is the cytoplasm. In terms of biological role, one of the proteins required for the normal export of preproteins out of the cell cytoplasm. It is a molecular chaperone that binds to a subset of precursor proteins, maintaining them in a translocation-competent state. It also specifically binds to its receptor SecA. This Haemophilus ducreyi (strain 35000HP / ATCC 700724) protein is Protein-export protein SecB.